The chain runs to 342 residues: Ribosomal RNA small subunit methyltransferase C (342 aa).

The protein belongs to the methyltransferase superfamily. RsmC family. In terms of assembly, monomer.

Its subcellular location is the cytoplasm. The enzyme catalyses guanosine(1207) in 16S rRNA + S-adenosyl-L-methionine = N(2)-methylguanosine(1207) in 16S rRNA + S-adenosyl-L-homocysteine + H(+). Functionally, specifically methylates the guanine in position 1207 of 16S rRNA in the 30S particle. The sequence is that of Ribosomal RNA small subunit methyltransferase C from Salmonella choleraesuis (strain SC-B67).